The primary structure comprises 463 residues: L-seryl-tRNA(Sec) selenium transferase (463 aa).

Position 295 is an N6-(pyridoxal phosphate)lysine (Lys295).

This sequence belongs to the SelA family. In terms of assembly, homodecamer; pentamer of dimers. Binds only one seryl-tRNA(Sec) per dimer. Pyridoxal 5'-phosphate is required as a cofactor.

Its subcellular location is the cytoplasm. The catalysed reaction is L-seryl-tRNA(Sec) + selenophosphate + H(+) = L-selenocysteinyl-tRNA(Sec) + phosphate. It functions in the pathway aminoacyl-tRNA biosynthesis; selenocysteinyl-tRNA(Sec) biosynthesis; selenocysteinyl-tRNA(Sec) from L-seryl-tRNA(Sec) (bacterial route): step 1/1. In terms of biological role, converts seryl-tRNA(Sec) to selenocysteinyl-tRNA(Sec) required for selenoprotein biosynthesis. This chain is L-seryl-tRNA(Sec) selenium transferase, found in Escherichia coli (strain SMS-3-5 / SECEC).